Consider the following 514-residue polypeptide: MLALLSVSDKRGLVPFAQGLVRLGFRLLSTGGTLEALKGAGVPVNKVSEHTQSPEILGGRVKTLHPRIHGGILGRLELEADREEMKAHGIEPISLVAVNLYPFRQTVASGAAEPEVIEQIDIGGPAMVRASAKNFRHVSVVVDPDDYPAVLAELEQQKAVSEDTRRRLMRKAFAHTAAYDASISAWLSAQAGEPFPGELSLAFQKSQDLRYGENPHQRGAFYREHAAPQEPTVAFAKVLQGKELSYNNILDLDAALGLLLEFPEAPAAVIIKHNTPCGVAVDAALVKAYRTARAVDEVSAFGGIVALNREVDAATAQAMAETFLEAVIAPSYSPEALQVLATKKNLRLLEAGPALASPQARPRAQLDARSVSGGMLLMDRDSVEPPLSWKVVSKRAPTPEEEQAMRFAWKVCKHVKSNAIVFASGDQLLAQGGGQTNRVDSVRIAMQRGGAALRGSAVASDAFFPFRDGLDEAARAGATCVVQPGGSVRDAELIAAADEHGMAMVLTGVRHFRH.

Residues 1 to 142 (MLALLSVSDK…KNFRHVSVVV (142 aa)) form the MGS-like domain.

This sequence belongs to the PurH family.

The catalysed reaction is (6R)-10-formyltetrahydrofolate + 5-amino-1-(5-phospho-beta-D-ribosyl)imidazole-4-carboxamide = 5-formamido-1-(5-phospho-D-ribosyl)imidazole-4-carboxamide + (6S)-5,6,7,8-tetrahydrofolate. The enzyme catalyses IMP + H2O = 5-formamido-1-(5-phospho-D-ribosyl)imidazole-4-carboxamide. It participates in purine metabolism; IMP biosynthesis via de novo pathway; 5-formamido-1-(5-phospho-D-ribosyl)imidazole-4-carboxamide from 5-amino-1-(5-phospho-D-ribosyl)imidazole-4-carboxamide (10-formyl THF route): step 1/1. It functions in the pathway purine metabolism; IMP biosynthesis via de novo pathway; IMP from 5-formamido-1-(5-phospho-D-ribosyl)imidazole-4-carboxamide: step 1/1. The polypeptide is Bifunctional purine biosynthesis protein PurH (Myxococcus xanthus (strain DK1622)).